Reading from the N-terminus, the 209-residue chain is uncharacterized protein (209 aa).

Belongs to the flavoredoxin family. It depends on FMN as a cofactor.

This is an uncharacterized protein from Halalkalibacterium halodurans (strain ATCC BAA-125 / DSM 18197 / FERM 7344 / JCM 9153 / C-125) (Bacillus halodurans).